We begin with the raw amino-acid sequence, 332 residues long: 5-dehydro-2-deoxygluconokinase 2 (332 aa).

This sequence belongs to the carbohydrate kinase PfkB family.

The catalysed reaction is 5-dehydro-2-deoxy-D-gluconate + ATP = 6-phospho-5-dehydro-2-deoxy-D-gluconate + ADP + H(+). Its pathway is polyol metabolism; myo-inositol degradation into acetyl-CoA; acetyl-CoA from myo-inositol: step 5/7. In terms of biological role, catalyzes the phosphorylation of 5-dehydro-2-deoxy-D-gluconate (2-deoxy-5-keto-D-gluconate or DKG) to 6-phospho-5-dehydro-2-deoxy-D-gluconate (DKGP). The chain is 5-dehydro-2-deoxygluconokinase 2 from Bacillus cereus (strain ZK / E33L).